Reading from the N-terminus, the 281-residue chain is UPF0162 protein XF_1494 (281 aa).

2 TPR repeats span residues 193–226 (VRIL…VPNQ) and 227–260 (PEAL…YPST).

The protein belongs to the UPF0162 family.

The protein is UPF0162 protein XF_1494 of Xylella fastidiosa (strain 9a5c).